The sequence spans 506 residues: Deoxyguanosinetriphosphate triphosphohydrolase (506 aa).

Positions 66–274 (RLTHSLEVQQ…MEAADDISYC (209 aa)) constitute an HD domain.

This sequence belongs to the dGTPase family. Type 1 subfamily. Homotetramer. Requires Mg(2+) as cofactor.

It carries out the reaction dGTP + H2O = 2'-deoxyguanosine + triphosphate + H(+). DGTPase preferentially hydrolyzes dGTP over the other canonical NTPs. In Yersinia pseudotuberculosis serotype O:3 (strain YPIII), this protein is Deoxyguanosinetriphosphate triphosphohydrolase.